Consider the following 584-residue polypeptide: 2-succinyl-5-enolpyruvyl-6-hydroxy-3-cyclohexene-1-carboxylate synthase (584 aa).

The protein belongs to the TPP enzyme family. MenD subfamily. Homodimer. Mg(2+) is required as a cofactor. Mn(2+) serves as cofactor. Requires thiamine diphosphate as cofactor.

It carries out the reaction isochorismate + 2-oxoglutarate + H(+) = 5-enolpyruvoyl-6-hydroxy-2-succinyl-cyclohex-3-ene-1-carboxylate + CO2. The protein operates within quinol/quinone metabolism; 1,4-dihydroxy-2-naphthoate biosynthesis; 1,4-dihydroxy-2-naphthoate from chorismate: step 2/7. Its pathway is quinol/quinone metabolism; menaquinone biosynthesis. Functionally, catalyzes the thiamine diphosphate-dependent decarboxylation of 2-oxoglutarate and the subsequent addition of the resulting succinic semialdehyde-thiamine pyrophosphate anion to isochorismate to yield 2-succinyl-5-enolpyruvyl-6-hydroxy-3-cyclohexene-1-carboxylate (SEPHCHC). The protein is 2-succinyl-5-enolpyruvyl-6-hydroxy-3-cyclohexene-1-carboxylate synthase of Bacillus thuringiensis (strain Al Hakam).